Here is a 140-residue protein sequence, read N- to C-terminus: Large ribosomal subunit protein uL16c (140 aa).

The protein belongs to the universal ribosomal protein uL16 family. In terms of assembly, part of the 50S ribosomal subunit.

It is found in the plastid. The protein resides in the chloroplast. This chain is Large ribosomal subunit protein uL16c, found in Psilotum nudum (Whisk fern).